A 493-amino-acid polypeptide reads, in one-letter code: Xaa-Pro dipeptidase (493 aa).

At Ala-2 the chain carries N-acetylalanine. Position 167 is a phosphoserine (Ser-167). His-255 contacts a dipeptide. Mn(2+)-binding residues include Asp-276, Asp-287, and His-370. Asp-287 provides a ligand contact to a dipeptide. Residues His-377 and Arg-398 each contribute to the a dipeptide site. Mn(2+) is bound by residues Glu-412 and Glu-452.

It belongs to the peptidase M24B family. Eukaryotic-type prolidase subfamily. As to quaternary structure, homodimer. The cofactor is Mn(2+).

It catalyses the reaction Xaa-L-Pro dipeptide + H2O = an L-alpha-amino acid + L-proline. With respect to regulation, specifically inhibited by the pseudodipeptide CQ31. Inhibition by CQ31 indirectly activates the CARD8 inflammasome: dipeptide accumulation following PEPD inactivation weaky inhibit dipeptidyl peptidases DDP8 and DPP9, relieving DPP8- and/or DPP9-mediated inhibition of CARD8. Functionally, dipeptidase that catalyzes the hydrolysis of dipeptides with a prolyl (Xaa-Pro) or hydroxyprolyl residue in the C-terminal position. The preferred dipeptide substrate is Gly-Pro, but other Xaa-Pro dipeptides, such as Ala-Pro, Met-Pro, Phe-Pro, Val-Pro and Leu-Pro, can be cleaved. Plays an important role in collagen metabolism because the high level of iminoacids in collagen. This is Xaa-Pro dipeptidase from Homo sapiens (Human).